Consider the following 416-residue polypeptide: Caspase-9 (416 aa).

Positions Met-1–Asn-92 constitute a CARD domain. Thr-125 is modified (phosphothreonine; by MAPK1). Tyr-153 carries the post-translational modification Phosphotyrosine; by ABL1. Catalysis depends on residues His-237 and Cys-287. The segment at His-294–Gln-320 is disordered. Ser-302, Ser-307, and Ser-310 each carry phosphoserine. A propeptide spanning residues Ala-316–Asp-330 is cleaved from the precursor. The residue at position 355 (Arg-355) is a (Microbial infection) ADP-riboxanated arginine.

This sequence belongs to the peptidase C14A family. In terms of assembly, heterotetramer that consists of two anti-parallel arranged heterodimers, each one formed by a 35 kDa (p35) and a 10 kDa (p10) subunit. Caspase-9 and APAF1 bind to each other via their respective NH2-terminal CED-3 homologous domains in the presence of cytochrome C and ATP. Interacts (inactive form) with EFHD2. Interacts with HAX1. Interacts with BIRC2/c-IAP1, XIAP/BIRC4, BIRC5/survivin, BIRC6/bruce and BIRC7/livin. Interacts with ABL1 (via SH3 domain); the interaction is direct and increases in the response of cells to genotoxic stress and ABL1/c-Abl activation. Interacts with BCL2L10. Interacts with NleF from pathogenic E.coli. Post-translationally, cleavages at Asp-315 by granzyme B and at Asp-330 by caspase-3 generate the two active subunits. Caspase-8 and -10 can also be involved in these processing events. Phosphorylated at Thr-125 by MAPK1/ERK2. Phosphorylation at Thr-125 is sufficient to block caspase-9 processing and subsequent caspase-3 activation. Phosphorylation on Tyr-153 by ABL1/c-Abl; occurs in the response of cells to DNA damage. In terms of processing, (Microbial infection) ADP-riboxanation by C.violaceum CopC blocks CASP9 processing, preventing CASP9 activation and ability to mediate intrinsic apoptosis. Post-translationally, ubiquitinated by BIRC6; this activity is inhibited by DIABLO/SMAC. In terms of tissue distribution, ubiquitous, with highest expression in the heart, moderate expression in liver, skeletal muscle, and pancreas. Low levels in all other tissues. Within the heart, specifically expressed in myocytes.

It carries out the reaction Strict requirement for an Asp residue at position P1 and with a marked preference for His at position P2. It has a preferred cleavage sequence of Leu-Gly-His-Asp-|-Xaa.. Its activity is regulated as follows. Inhibited by the effector protein NleF that is produced by pathogenic E.coli; this inhibits apoptosis. Inhibited by BIRC6; following inhibition of BIRC6-caspase binding by DIABLO/SMAC, BIRC6 is subjected to caspase cleavage, leading to an increase in active caspases. In terms of biological role, involved in the activation cascade of caspases responsible for apoptosis execution. Binding of caspase-9 to Apaf-1 leads to activation of the protease which then cleaves and activates effector caspases caspase-3 (CASP3) or caspase-7 (CASP7). Promotes DNA damage-induced apoptosis in a ABL1/c-Abl-dependent manner. Proteolytically cleaves poly(ADP-ribose) polymerase (PARP). Cleaves BIRC6 following inhibition of BIRC6-caspase binding by DIABLO/SMAC. Functionally, lacks activity is an dominant-negative inhibitor of caspase-9. The polypeptide is Caspase-9 (CASP9) (Homo sapiens (Human)).